The primary structure comprises 145 residues: Histone H2B.7 (145 aa).

A compositionally biased stretch (basic and acidic residues) spans 1-30 (MAPKAEKKPAEKKPVEEKSKAEKAPAEKKP). Positions 1-53 (MAPKAEKKPAEKKPVEEKSKAEKAPAEKKPKAGKKLPKEAGAGGDKKKKMKKK) are disordered. Residue Ala-2 is modified to N,N,N-trimethylalanine; alternate. Ala-2 is subject to N,N-dimethylalanine; alternate. Ala-2 carries the N-methylalanine; alternate modification. Residue Lys-4 is modified to N6-methyllysine; partial. N6-acetyllysine is present on residues Lys-7 and Lys-12. Lys-13 carries the post-translational modification N6,N6-dimethyllysine. Residues Lys-23, Lys-28, and Lys-34 each carry the N6-acetyllysine modification. Lys-35 carries the N6-acetyllysine; partial modification. Lys-141 participates in a covalent cross-link: Glycyl lysine isopeptide (Lys-Gly) (interchain with G-Cter in ubiquitin).

The protein belongs to the histone H2B family. The nucleosome is a histone octamer containing two molecules each of H2A, H2B, H3 and H4 assembled in one H3-H4 heterotetramer and two H2A-H2B heterodimers. The octamer wraps approximately 147 bp of DNA. Post-translationally, can be acetylated to form H2BK6ac, H2BK11ac, H2BK22ac, H2BK27ac H2BK33ac and H2BK34ac. Mono-, di- or trimethylated at the N-terminus to form H2BA1me1/2/3. H2BA1me2 and H2BA1me3 may be methylated and/or acetylated to form H2BA1me2K3me1, H2BA1me2K3me1K6ac, H2BA1me2K6ac H2BA1me3K6ac, H2BA1me3K6acK11ac and H2BA1me2K3me1K6acK11ac. In terms of processing, monoubiquitinated by BRE1 to form H2BK143ub1 and deubiquitinated by UBP26. Required for heterochromatic histone H3 di- and trimethylation at H3K4me. May give a specific tag for epigenetic transcriptional activation.

It is found in the nucleus. The protein resides in the chromosome. Its function is as follows. Core component of nucleosome. Nucleosomes wrap and compact DNA into chromatin, limiting DNA accessibility to the cellular machineries which require DNA as a template. Histones thereby play a central role in transcription regulation, DNA repair, DNA replication and chromosomal stability. DNA accessibility is regulated via a complex set of post-translational modifications of histones, also called histone code, and nucleosome remodeling. The sequence is that of Histone H2B.7 from Arabidopsis thaliana (Mouse-ear cress).